The chain runs to 223 residues: Probable cell wall protein PGA61 (223 aa).

The N-terminal stretch at 1–16 (MKSGLLLAVILPVAFA) is a signal peptide. An N-linked (GlcNAc...) asparagine glycan is attached at Asn25. The disordered stretch occupies residues 83–134 (GAPSSSSTPTSSTETTSSTEAETTEAETTEQPSSSTSSNTESSKTTILETPS). 2 stretches are compositionally biased toward low complexity: residues 84 to 103 (APSS…STEA) and 111 to 128 (TEQP…SKTT). The N-linked (GlcNAc...) asparagine glycan is linked to Asn188. Asn202 carries the GPI-anchor amidated asparagine lipid modification. Residues 203-223 (GAGRAAVIGSGSLLALLLNFI) constitute a propeptide, removed in mature form.

Belongs to the IHD1 family. The GPI-anchor is attached to the protein in the endoplasmic reticulum and serves to target the protein to the cell surface. There, the glucosamine-inositol phospholipid moiety is cleaved off and the GPI-modified mannoprotein is covalently attached via its lipidless GPI glycan remnant to the 1,6-beta-glucan of the outer cell wall layer.

The protein resides in the secreted. The protein localises to the cell wall. It is found in the membrane. In terms of biological role, probable GPI-anchored cell wall protein that may be involved in cell wall organization, hyphal growth, as well as in virulence. The sequence is that of Probable cell wall protein PGA61 (PGA61) from Candida albicans (strain SC5314 / ATCC MYA-2876) (Yeast).